Consider the following 688-residue polypeptide: Probable transcription factor gsfR1 (688 aa).

The segment covering 1–16 has biased composition (acidic residues); that stretch reads MSDGPETAEGDTDDAV. A disordered region spans residues 1-95; the sequence is MSDGPETAEG…TPVSSRGSIA (95 aa). The span at 24–36 shows a compositional bias: polar residues; sequence RVASESSARSQPR. Over residues 58–75 the composition is skewed to basic and acidic residues; it reads EHSKEKNVSRRLPTEKTP.

Its subcellular location is the nucleus. Its function is as follows. Probable transcription factor that regulates expression of the gene cluster that mediates the biosynthesis of Griseofulvin, an important antifungal drug that has been in use for a long time for treating dermatophyte infections. The polypeptide is Probable transcription factor gsfR1 (Penicillium aethiopicum).